We begin with the raw amino-acid sequence, 280 residues long: MKKEKLRTENISFQYPGAATYALKDVSFSLFEGEWVSVIGQNGSGKSTLAKLLNGLFLPEAGTITVNDTMILSEETVWDVRKQIGMVFQNPDNQFVGTTVQDDVVFGLENIGMPREQMVERLNQALRLVRMEDFLNDEPHSLSGGQKQRVAIAGVLALQPSILILDEATSMLDPQGRREVVETVRQLVNEKGITVLSITHDLEEAAQSDRVIILNKGEILEEGIPEQIFKSSHMLQEIGLDVPFSVKIAELLKRNEILLQNTHLTMESLVNELWRLHSKK.

The ABC transporter domain maps to 6–241 (LRTENISFQY…SHMLQEIGLD (236 aa)). 40–47 (GQNGSGKS) contacts ATP.

Belongs to the ABC transporter superfamily. Energy-coupling factor EcfA family. As to quaternary structure, forms a stable energy-coupling factor (ECF) transporter complex composed of 2 membrane-embedded substrate-binding proteins (S component), 2 ATP-binding proteins (A component) and 2 transmembrane proteins (T component).

The protein localises to the cell membrane. In terms of biological role, ATP-binding (A) component of a common energy-coupling factor (ECF) ABC-transporter complex. Unlike classic ABC transporters this ECF transporter provides the energy necessary to transport a number of different substrates. In Bacillus cereus (strain ZK / E33L), this protein is Energy-coupling factor transporter ATP-binding protein EcfA1.